A 181-amino-acid chain; its full sequence is HGPRTase-like protein 2 (181 aa).

The protein belongs to the purine/pyrimidine phosphoribosyltransferase family. Archaeal HPRT subfamily.

May catalyze a purine salvage reaction, the substrate is unknown. The chain is HGPRTase-like protein 2 from Haloquadratum walsbyi (strain DSM 16854 / JCM 12705 / C23).